A 120-amino-acid chain; its full sequence is NAD(P)H-quinone oxidoreductase subunit 3, chloroplastic (120 aa).

The next 3 helical transmembrane spans lie at 9–29 (IFWAFLIISSLIPILVFFISG), 64–84 (MFALVFVVFDVETVFLYPWAM), and 88–108 (VLGVSVFVEALIFVLILIVGL).

This sequence belongs to the complex I subunit 3 family. In terms of assembly, NDH is composed of at least 16 different subunits, 5 of which are encoded in the nucleus.

Its subcellular location is the plastid. The protein localises to the chloroplast thylakoid membrane. The catalysed reaction is a plastoquinone + NADH + (n+1) H(+)(in) = a plastoquinol + NAD(+) + n H(+)(out). The enzyme catalyses a plastoquinone + NADPH + (n+1) H(+)(in) = a plastoquinol + NADP(+) + n H(+)(out). Functionally, NDH shuttles electrons from NAD(P)H:plastoquinone, via FMN and iron-sulfur (Fe-S) centers, to quinones in the photosynthetic chain and possibly in a chloroplast respiratory chain. The immediate electron acceptor for the enzyme in this species is believed to be plastoquinone. Couples the redox reaction to proton translocation, and thus conserves the redox energy in a proton gradient. The chain is NAD(P)H-quinone oxidoreductase subunit 3, chloroplastic from Lactuca sativa (Garden lettuce).